The following is a 220-amino-acid chain: Uracil-DNA glycosylase (220 aa).

Residue D65 is the Proton acceptor of the active site.

The protein belongs to the uracil-DNA glycosylase (UDG) superfamily. UNG family.

It is found in the cytoplasm. The enzyme catalyses Hydrolyzes single-stranded DNA or mismatched double-stranded DNA and polynucleotides, releasing free uracil.. Excises uracil residues from the DNA which can arise as a result of misincorporation of dUMP residues by DNA polymerase or due to deamination of cytosine. The protein is Uracil-DNA glycosylase of Bacteroides thetaiotaomicron (strain ATCC 29148 / DSM 2079 / JCM 5827 / CCUG 10774 / NCTC 10582 / VPI-5482 / E50).